A 198-amino-acid polypeptide reads, in one-letter code: Elongation factor Ts (198 aa).

Residues 81–84 (TDFV) form an involved in Mg(2+) ion dislocation from EF-Tu region.

The protein belongs to the EF-Ts family.

Its subcellular location is the cytoplasm. Its function is as follows. Associates with the EF-Tu.GDP complex and induces the exchange of GDP to GTP. It remains bound to the aminoacyl-tRNA.EF-Tu.GTP complex up to the GTP hydrolysis stage on the ribosome. The protein is Elongation factor Ts of Pseudothermotoga lettingae (strain ATCC BAA-301 / DSM 14385 / NBRC 107922 / TMO) (Thermotoga lettingae).